Here is a 639-residue protein sequence, read N- to C-terminus: Putative cyclic beta-1,2-glucan modification protein (639 aa).

Helical transmembrane passes span 34-54 (ALFT…IVRW), 69-89 (PAWT…ALFG), 96-116 (LLIA…QVFL), 144-164 (WTAV…ALLL), 185-205 (FALP…FSWI), and 227-247 (FALA…AGYM).

The protein localises to the cell membrane. This chain is Putative cyclic beta-1,2-glucan modification protein (cgmA), found in Rhizobium meliloti (strain 1021) (Ensifer meliloti).